A 135-amino-acid polypeptide reads, in one-letter code: Large ribosomal subunit protein uL16c (135 aa).

The protein belongs to the universal ribosomal protein uL16 family. As to quaternary structure, part of the 50S ribosomal subunit.

It is found in the plastid. Its subcellular location is the chloroplast. The polypeptide is Large ribosomal subunit protein uL16c (Ranunculus macranthus (Large buttercup)).